A 417-amino-acid polypeptide reads, in one-letter code: Serine hydroxymethyltransferase (417 aa).

Residues leucine 121 and 125–127 contribute to the (6S)-5,6,7,8-tetrahydrofolate site; that span reads GHL. An N6-(pyridoxal phosphate)lysine modification is found at lysine 229. Position 355–357 (355–357) interacts with (6S)-5,6,7,8-tetrahydrofolate; that stretch reads SPF.

The protein belongs to the SHMT family. In terms of assembly, homodimer. It depends on pyridoxal 5'-phosphate as a cofactor.

The protein localises to the cytoplasm. It carries out the reaction (6R)-5,10-methylene-5,6,7,8-tetrahydrofolate + glycine + H2O = (6S)-5,6,7,8-tetrahydrofolate + L-serine. It functions in the pathway one-carbon metabolism; tetrahydrofolate interconversion. The protein operates within amino-acid biosynthesis; glycine biosynthesis; glycine from L-serine: step 1/1. Its function is as follows. Catalyzes the reversible interconversion of serine and glycine with tetrahydrofolate (THF) serving as the one-carbon carrier. This reaction serves as the major source of one-carbon groups required for the biosynthesis of purines, thymidylate, methionine, and other important biomolecules. Also exhibits THF-independent aldolase activity toward beta-hydroxyamino acids, producing glycine and aldehydes, via a retro-aldol mechanism. In Aeromonas salmonicida (strain A449), this protein is Serine hydroxymethyltransferase.